We begin with the raw amino-acid sequence, 346 residues long: Putative isoaspartyl peptidase/L-asparaginase (346 aa).

The active-site Nucleophile is Thr-207. Residues Arg-235–Asp-238 and Thr-257–Gly-260 each bind substrate.

The protein belongs to the Ntn-hydrolases family. Heterodimer of an alpha and beta chain produced by autocleavage. In terms of processing, cleaved into an alpha and beta chain by autocatalysis; this activates the enzyme. The N-terminal residue of the beta subunit is responsible for the nucleophile hydrolase activity.

It catalyses the reaction Cleavage of a beta-linked Asp residue from the N-terminus of a polypeptide.. The enzyme catalyses L-asparagine + H2O = L-aspartate + NH4(+). Has both L-asparaginase and beta-aspartyl peptidase activity. Does not have aspartylglucosaminidase activity and is inactive toward GlcNAc-L-Asn. Likewise, has no activity toward glutamine. This chain is Putative isoaspartyl peptidase/L-asparaginase, found in Dictyostelium discoideum (Social amoeba).